We begin with the raw amino-acid sequence, 406 residues long: Terminal uridylyltransferase 7 (406 aa).

The transit peptide at 1–15 (MNVAKREFIRGMMAH) directs the protein to the mitochondrion. Residues S54 and 64–65 (SD) contribute to the UTP site. Positions 65 and 67 each coordinate Mg(2+). UTP-binding positions include 138-142 (GVENS), K164, K168, and 181-183 (NSF).

The protein belongs to the DNA polymerase type-B-like family. As to quaternary structure, component of the mitochondrial RNA editing core complex-like (RECC-like), also known as the editosome-like complex; only a small proportion of MEAT1 associates with the complex. Interacts with RNA-editing ligase REL1. The cofactor is Mg(2+).

The protein localises to the mitochondrion matrix. The enzyme catalyses RNA(n) + UTP = RNA(n)-3'-uridine ribonucleotide + diphosphate. Terminal uridylyltransferase which, as part of the mitochondrial RNA editing core-like complex (RECC-like), is involved in the post-transcriptional editing of mitochondrial RNA, a process involving the addition and deletion of uridine (U) nucleotides in the pre-mRNA. Specifically, catalyzes the addition of U to single-stranded RNA with a preference for a 3'-terminal U and adds the number of Us specified by a guide RNA (gRNA) to precleaved double-stranded RNA editing substrates. Essential for insect and bloodstream developmental forms viability. This chain is Terminal uridylyltransferase 7, found in Trypanosoma brucei brucei.